A 514-amino-acid polypeptide reads, in one-letter code: MQQLNPSEISEIIKQRIESLDVTAQARNEGTIVSVSDGIVRIYGLADVMYGEMIEFPGGVYGMALNLEQDSVGAVVLGSYLTLAEGMSAKCTGRILEVPVGPELLGRVVDALGNPIDGKGPINAAASDAVEKVAPGVIWRKSVDQPVQTGYKSVDAMIPVGRGQRELIIGDRQIGKTALAVDAIINQKDSGIRCVYVAIGQKQSTIANVVRKLEEAGALANTIVVAASASESAALQFLAPYAGCTMGEYFRDRGEDALIVYDDLSKQAVAYRQISLLLRRPPGREAYPGDVFYLHSRLLERASRVSEEYVEKFTNGAVKGKTGSLTALPIIETQAGDVSAFVPTNVISITDGQIFLESAMFNSGIRPAVNAGISVSRVGGAAQTKIIKKLSGGIRTALAQYRELAAFAQFASDLDEATRKQLEHGQRVTELMKQKQYAPMSIAEMSVSLYAAERGFLQDVEVAKVISFEQALIAFFKRDHADLMAKINEKGDFNDEIDAGLKAGIEKFKATQTW.

170-177 (GDRQIGKT) lines the ATP pocket.

This sequence belongs to the ATPase alpha/beta chains family. In terms of assembly, F-type ATPases have 2 components, CF(1) - the catalytic core - and CF(0) - the membrane proton channel. CF(1) has five subunits: alpha(3), beta(3), gamma(1), delta(1), epsilon(1). CF(0) has three main subunits: a(1), b(2) and c(9-12). The alpha and beta chains form an alternating ring which encloses part of the gamma chain. CF(1) is attached to CF(0) by a central stalk formed by the gamma and epsilon chains, while a peripheral stalk is formed by the delta and b chains.

The protein resides in the cell inner membrane. The enzyme catalyses ATP + H2O + 4 H(+)(in) = ADP + phosphate + 5 H(+)(out). Produces ATP from ADP in the presence of a proton gradient across the membrane. The alpha chain is a regulatory subunit. The chain is ATP synthase subunit alpha from Ectopseudomonas mendocina (strain ymp) (Pseudomonas mendocina).